The sequence spans 239 residues: 1-(5-phosphoribosyl)-5-[(5-phosphoribosylamino)methylideneamino] imidazole-4-carboxamide isomerase (239 aa).

Asp-7 serves as the catalytic Proton acceptor. The active-site Proton donor is the Asp-129.

This sequence belongs to the HisA/HisF family.

It localises to the cytoplasm. It catalyses the reaction 1-(5-phospho-beta-D-ribosyl)-5-[(5-phospho-beta-D-ribosylamino)methylideneamino]imidazole-4-carboxamide = 5-[(5-phospho-1-deoxy-D-ribulos-1-ylimino)methylamino]-1-(5-phospho-beta-D-ribosyl)imidazole-4-carboxamide. Its pathway is amino-acid biosynthesis; L-histidine biosynthesis; L-histidine from 5-phospho-alpha-D-ribose 1-diphosphate: step 4/9. This Lactiplantibacillus plantarum (strain ATCC BAA-793 / NCIMB 8826 / WCFS1) (Lactobacillus plantarum) protein is 1-(5-phosphoribosyl)-5-[(5-phosphoribosylamino)methylideneamino] imidazole-4-carboxamide isomerase.